We begin with the raw amino-acid sequence, 473 residues long: Ribulose bisphosphate carboxylase large chain (473 aa).

Residues asparagine 116 and threonine 166 each contribute to the substrate site. Lysine 168 serves as the catalytic Proton acceptor. Lysine 170 is a binding site for substrate. Residues lysine 194, aspartate 196, and glutamate 197 each coordinate Mg(2+). Lysine 194 carries the N6-carboxylysine modification. Histidine 287 (proton acceptor) is an active-site residue. Substrate is bound by residues arginine 288, histidine 320, and serine 372.

Belongs to the RuBisCO large chain family. Type I subfamily. As to quaternary structure, heterohexadecamer of 8 large chains and 8 small chains. Requires Mg(2+) as cofactor.

It carries out the reaction 2 (2R)-3-phosphoglycerate + 2 H(+) = D-ribulose 1,5-bisphosphate + CO2 + H2O. The enzyme catalyses D-ribulose 1,5-bisphosphate + O2 = 2-phosphoglycolate + (2R)-3-phosphoglycerate + 2 H(+). RuBisCO catalyzes two reactions: the carboxylation of D-ribulose 1,5-bisphosphate, the primary event in carbon dioxide fixation, as well as the oxidative fragmentation of the pentose substrate. Both reactions occur simultaneously and in competition at the same active site. This Methylococcus capsulatus (strain ATCC 33009 / NCIMB 11132 / Bath) protein is Ribulose bisphosphate carboxylase large chain.